Here is a 398-residue protein sequence, read N- to C-terminus: Probable aminomethyltransferase (398 aa).

Belongs to the GcvT family. As to quaternary structure, the glycine cleavage system is composed of four proteins: P, T, L and H.

The catalysed reaction is N(6)-[(R)-S(8)-aminomethyldihydrolipoyl]-L-lysyl-[protein] + (6S)-5,6,7,8-tetrahydrofolate = N(6)-[(R)-dihydrolipoyl]-L-lysyl-[protein] + (6R)-5,10-methylene-5,6,7,8-tetrahydrofolate + NH4(+). In terms of biological role, the glycine cleavage system catalyzes the degradation of glycine. In Thermococcus kodakarensis (strain ATCC BAA-918 / JCM 12380 / KOD1) (Pyrococcus kodakaraensis (strain KOD1)), this protein is Probable aminomethyltransferase.